The primary structure comprises 200 residues: NAD(P)H dehydrogenase (quinone) (200 aa).

The region spanning 4-191 (VLVLYYSSYG…DIARYQGKHV (188 aa)) is the Flavodoxin-like domain. FMN-binding positions include 10–15 (SSYGHV) and 79–81 (TRF). An NAD(+)-binding site is contributed by Tyr12. Trp99 contacts substrate. Residues 114–120 (STGTQHG) and His135 contribute to the FMN site.

Belongs to the WrbA family. Requires FMN as cofactor.

The catalysed reaction is a quinone + NADH + H(+) = a quinol + NAD(+). The enzyme catalyses a quinone + NADPH + H(+) = a quinol + NADP(+). The polypeptide is NAD(P)H dehydrogenase (quinone) (Burkholderia cenocepacia (strain ATCC BAA-245 / DSM 16553 / LMG 16656 / NCTC 13227 / J2315 / CF5610) (Burkholderia cepacia (strain J2315))).